A 752-amino-acid chain; its full sequence is Probable cell surface ferric reductase kap2 (752 aa).

The chain crosses the membrane as a helical span at residues glycine 40 to isoleucine 60. N-linked (GlcNAc...) asparagine glycosylation is found at asparagine 118 and asparagine 133. 2 helical membrane-spanning segments follow: residues isoleucine 157–leucine 177 and proline 195–leucine 215. The region spanning alanine 201 to serine 348 is the Ferric oxidoreductase domain. Heme contacts are provided by histidine 237 and histidine 251. 3 helical membrane-spanning segments follow: residues glycine 241–tryptophan 261, glycine 281–leucine 301, and tyrosine 306–tryptophan 326. Histidine 313 and histidine 327 together coordinate heme. Residues phenylalanine 331 to valine 351 form a helical membrane-spanning segment. Positions tyrosine 349–aspartate 475 constitute an FAD-binding FR-type domain. Residue asparagine 357 is glycosylated (N-linked (GlcNAc...) asparagine). Position 467–470 (glycine 467–glycine 470) interacts with NADP(+). A helical transmembrane segment spans residues valine 482 to isoleucine 502. N-linked (GlcNAc...) asparagine glycosylation occurs at asparagine 627. Position 714–715 (cysteine 714–glycine 715) interacts with NADP(+).

It belongs to the ferric reductase (FRE) family. It depends on FAD as a cofactor. Heme serves as cofactor.

Its subcellular location is the cell membrane. It carries out the reaction 2 a Fe(II)-siderophore + NADP(+) + H(+) = 2 a Fe(III)-siderophore + NADPH. Probable cell surface ferric reductase that acts as a negative regulatory factor of growth and development. Involved in kojic acid production through the regulation of kojA expression. The chain is Probable cell surface ferric reductase kap2 from Aspergillus oryzae (strain ATCC 42149 / RIB 40) (Yellow koji mold).